Consider the following 554-residue polypeptide: CTP synthase (554 aa).

The segment at 1–279 (MTSSRKVRPT…DTFIIRRLGL (279 aa)) is amidoligase domain. Serine 21 serves as a coordination point for CTP. UTP is bound at residue serine 21. Residues 22-27 (SLGKGL) and aspartate 79 contribute to the ATP site. Aspartate 79 and glutamate 153 together coordinate Mg(2+). CTP-binding positions include 160–162 (DIE), 200–205 (KTKPTQ), and lysine 236. UTP-binding positions include 200-205 (KTKPTQ) and lysine 236. In terms of domain architecture, Glutamine amidotransferase type-1 spans 304–553 (TVGIVGKYID…VKTALELRVH (250 aa)). Glycine 367 lines the L-glutamine pocket. The active-site Nucleophile; for glutamine hydrolysis is cysteine 394. L-glutamine-binding positions include 395–398 (LGLQ), glutamate 417, and arginine 478. Active-site residues include histidine 526 and glutamate 528.

The protein belongs to the CTP synthase family. As to quaternary structure, homotetramer.

The catalysed reaction is UTP + L-glutamine + ATP + H2O = CTP + L-glutamate + ADP + phosphate + 2 H(+). It catalyses the reaction L-glutamine + H2O = L-glutamate + NH4(+). The enzyme catalyses UTP + NH4(+) + ATP = CTP + ADP + phosphate + 2 H(+). It functions in the pathway pyrimidine metabolism; CTP biosynthesis via de novo pathway; CTP from UDP: step 2/2. With respect to regulation, allosterically activated by GTP, when glutamine is the substrate; GTP has no effect on the reaction when ammonia is the substrate. The allosteric effector GTP functions by stabilizing the protein conformation that binds the tetrahedral intermediate(s) formed during glutamine hydrolysis. Inhibited by the product CTP, via allosteric rather than competitive inhibition. Functionally, catalyzes the ATP-dependent amination of UTP to CTP with either L-glutamine or ammonia as the source of nitrogen. Regulates intracellular CTP levels through interactions with the four ribonucleotide triphosphates. The protein is CTP synthase of Corynebacterium glutamicum (strain R).